The primary structure comprises 151 residues: Probable cGMP 3',5'-cyclic phosphodiesterase subunit delta (151 aa).

The protein belongs to the PDE6D/unc-119 family. In terms of assembly, interacts with Pde6.

The protein resides in the nucleus. Its subcellular location is the cytoplasm. This is Probable cGMP 3',5'-cyclic phosphodiesterase subunit delta from Drosophila grimshawi (Hawaiian fruit fly).